Here is a 207-residue protein sequence, read N- to C-terminus: Holliday junction branch migration complex subunit RuvA (207 aa).

Positions 1–64 (MISYIKGELA…EDECSLFGFL (64 aa)) are domain I. Positions 65–143 (TRDDLSMFKM…LDEVFESALS (79 aa)) are domain II. The tract at residues 144 to 155 (KNKKADNNSNVS) is flexible linker. The segment at 156 to 207 (NVMMIRNDAVEALVSLGYSSKDALVAVKEVEDIENKDSETVLKEALKKLVKF) is domain III.

Belongs to the RuvA family. As to quaternary structure, homotetramer. Forms an RuvA(8)-RuvB(12)-Holliday junction (HJ) complex. HJ DNA is sandwiched between 2 RuvA tetramers; dsDNA enters through RuvA and exits via RuvB. An RuvB hexamer assembles on each DNA strand where it exits the tetramer. Each RuvB hexamer is contacted by two RuvA subunits (via domain III) on 2 adjacent RuvB subunits; this complex drives branch migration. In the full resolvosome a probable DNA-RuvA(4)-RuvB(12)-RuvC(2) complex forms which resolves the HJ.

It localises to the cytoplasm. Its function is as follows. The RuvA-RuvB-RuvC complex processes Holliday junction (HJ) DNA during genetic recombination and DNA repair, while the RuvA-RuvB complex plays an important role in the rescue of blocked DNA replication forks via replication fork reversal (RFR). RuvA specifically binds to HJ cruciform DNA, conferring on it an open structure. The RuvB hexamer acts as an ATP-dependent pump, pulling dsDNA into and through the RuvAB complex. HJ branch migration allows RuvC to scan DNA until it finds its consensus sequence, where it cleaves and resolves the cruciform DNA. The polypeptide is Holliday junction branch migration complex subunit RuvA (Lachnospira eligens (strain ATCC 27750 / DSM 3376 / VPI C15-48 / C15-B4) (Eubacterium eligens)).